We begin with the raw amino-acid sequence, 362 residues long: Phosphoserine aminotransferase (362 aa).

The L-glutamate site is built by Ser-9 and Arg-42. Pyridoxal 5'-phosphate contacts are provided by residues 76 to 77 (GR), Trp-102, Thr-153, Asp-174, and Gln-197. The residue at position 198 (Lys-198) is an N6-(pyridoxal phosphate)lysine. Pyridoxal 5'-phosphate is bound at residue 239–240 (NT).

This sequence belongs to the class-V pyridoxal-phosphate-dependent aminotransferase family. SerC subfamily. As to quaternary structure, homodimer. Pyridoxal 5'-phosphate serves as cofactor.

The protein localises to the cytoplasm. It carries out the reaction O-phospho-L-serine + 2-oxoglutarate = 3-phosphooxypyruvate + L-glutamate. The catalysed reaction is 4-(phosphooxy)-L-threonine + 2-oxoglutarate = (R)-3-hydroxy-2-oxo-4-phosphooxybutanoate + L-glutamate. The protein operates within amino-acid biosynthesis; L-serine biosynthesis; L-serine from 3-phospho-D-glycerate: step 2/3. Its pathway is cofactor biosynthesis; pyridoxine 5'-phosphate biosynthesis; pyridoxine 5'-phosphate from D-erythrose 4-phosphate: step 3/5. Functionally, catalyzes the reversible conversion of 3-phosphohydroxypyruvate to phosphoserine and of 3-hydroxy-2-oxo-4-phosphonooxybutanoate to phosphohydroxythreonine. The protein is Phosphoserine aminotransferase of Citrobacter koseri (strain ATCC BAA-895 / CDC 4225-83 / SGSC4696).